Here is a 215-residue protein sequence, read N- to C-terminus: Cytochrome b6 (215 aa).

The helical transmembrane segment at 32–52 (IFYCLGGITLTCFLVQVATGF) threads the bilayer. Cysteine 35 is a heme c binding site. Heme b is bound by residues histidine 86 and histidine 100. 3 helical membrane-spanning segments follow: residues 90-110 (ASMMVLMMILHVFRVYLTGGF), 116-136 (LTWVTGVVLGVLTASFGVTGY), and 186-206 (LHTFVLPLLTAVFMLMHFPMI). Heme b contacts are provided by histidine 187 and histidine 202.

This sequence belongs to the cytochrome b family. PetB subfamily. The 4 large subunits of the cytochrome b6-f complex are cytochrome b6, subunit IV (17 kDa polypeptide, PetD), cytochrome f and the Rieske protein, while the 4 small subunits are PetG, PetL, PetM and PetN. The complex functions as a dimer. Heme b serves as cofactor. It depends on heme c as a cofactor.

The protein localises to the plastid. The protein resides in the chloroplast thylakoid membrane. In terms of biological role, component of the cytochrome b6-f complex, which mediates electron transfer between photosystem II (PSII) and photosystem I (PSI), cyclic electron flow around PSI, and state transitions. In Lactuca sativa (Garden lettuce), this protein is Cytochrome b6.